The primary structure comprises 175 residues: ATP-dependent protease subunit HslV (175 aa).

The active site involves T2. 3 residues coordinate Na(+): G158, C161, and T164.

The protein belongs to the peptidase T1B family. HslV subfamily. As to quaternary structure, a double ring-shaped homohexamer of HslV is capped on each side by a ring-shaped HslU homohexamer. The assembly of the HslU/HslV complex is dependent on binding of ATP.

The protein localises to the cytoplasm. The catalysed reaction is ATP-dependent cleavage of peptide bonds with broad specificity.. With respect to regulation, allosterically activated by HslU binding. Functionally, protease subunit of a proteasome-like degradation complex believed to be a general protein degrading machinery. The sequence is that of ATP-dependent protease subunit HslV from Haemophilus influenzae (strain ATCC 51907 / DSM 11121 / KW20 / Rd).